The sequence spans 330 residues: AH receptor-interacting protein (330 aa).

A PPIase FKBP-type domain is found at 31–121; sequence GTKATFHYRT…KDPLEGQRHC (91 aa). Position 43 is a phosphoserine (S43). TPR repeat units follow at residues 179 to 212, 231 to 264, and 265 to 298; these read VPLIHQEGNRLYREGHVKEAAAKYYDAIACLKNL, TPLLLNYCQCKLVVEEYYEVLDHCSSILNKYDDN, and VKAYFKRGKAHAAVWNAQEAQADFAKVLELDPAL.

Interacts with RET in the pituitary gland; this interaction prevents the formation of the AIP-survivin complex. As to expression, widely expressed. Higher levels seen in the heart, placenta and skeletal muscle. Not expressed in the liver.

The protein resides in the cytoplasm. Its function is as follows. May play a positive role in AHR-mediated (aromatic hydrocarbon receptor) signaling, possibly by influencing its receptivity for ligand and/or its nuclear targeting. Functionally, cellular negative regulator of the hepatitis B virus (HBV) X protein. This chain is AH receptor-interacting protein (AIP), found in Homo sapiens (Human).